The sequence spans 108 residues: Phosphoribosyl-AMP cyclohydrolase (108 aa).

Aspartate 78 provides a ligand contact to Mg(2+). Cysteine 79 lines the Zn(2+) pocket. The Mg(2+) site is built by aspartate 80 and aspartate 82. Positions 95 and 102 each coordinate Zn(2+).

The protein belongs to the PRA-CH family. Homodimer. The cofactor is Mg(2+). Zn(2+) serves as cofactor.

It localises to the cytoplasm. The catalysed reaction is 1-(5-phospho-beta-D-ribosyl)-5'-AMP + H2O = 1-(5-phospho-beta-D-ribosyl)-5-[(5-phospho-beta-D-ribosylamino)methylideneamino]imidazole-4-carboxamide. It functions in the pathway amino-acid biosynthesis; L-histidine biosynthesis; L-histidine from 5-phospho-alpha-D-ribose 1-diphosphate: step 3/9. Its function is as follows. Catalyzes the hydrolysis of the adenine ring of phosphoribosyl-AMP. The sequence is that of Phosphoribosyl-AMP cyclohydrolase from Cenarchaeum symbiosum (strain A).